The primary structure comprises 156 residues: Transcription elongation factor GreA (156 aa).

Positions 46-67 form a coiled coil; it reads AEYHAAREKQSFIEGRIKELEA.

The protein belongs to the GreA/GreB family.

Necessary for efficient RNA polymerase transcription elongation past template-encoded arresting sites. The arresting sites in DNA have the property of trapping a certain fraction of elongating RNA polymerases that pass through, resulting in locked ternary complexes. Cleavage of the nascent transcript by cleavage factors such as GreA or GreB allows the resumption of elongation from the new 3'terminus. GreA releases sequences of 2 to 3 nucleotides. The chain is Transcription elongation factor GreA from Cereibacter sphaeroides (strain ATCC 17029 / ATH 2.4.9) (Rhodobacter sphaeroides).